An 883-amino-acid polypeptide reads, in one-letter code: Translation initiation factor IF-2 (883 aa).

The tract at residues 1 to 259 (MVDTKTPGDK…GASKQRGRLT (259 aa)) is disordered. 2 stretches are compositionally biased toward low complexity: residues 10–22 (KTLT…LTLK) and 77–89 (PRQQ…PQQS). The segment covering 113-184 (ARVREIEERK…GDAEPAKKPA (72 aa)) has biased composition (basic and acidic residues). A compositionally biased stretch (low complexity) spans 185-218 (ETSTTTTTAAPARPATTTTRTPTPAGRPPAVAAE). Residues 235–244 (PARPAPPPKQ) show a composition bias toward pro residues. In terms of domain architecture, tr-type G spans 379–548 (PRSPVVTVMG…MIALQAEILE (170 aa)). Residues 388 to 395 (GHVDHGKT) form a G1 region. GTP is bound at residue 388–395 (GHVDHGKT). A G2 region spans residues 413–417 (GITQH). The tract at residues 436–439 (DTPG) is G3. GTP-binding positions include 436–440 (DTPGH) and 490–493 (NKID). Residues 490–493 (NKID) are G4. Positions 526–528 (SAK) are G5.

It belongs to the TRAFAC class translation factor GTPase superfamily. Classic translation factor GTPase family. IF-2 subfamily.

It is found in the cytoplasm. One of the essential components for the initiation of protein synthesis. Protects formylmethionyl-tRNA from spontaneous hydrolysis and promotes its binding to the 30S ribosomal subunits. Also involved in the hydrolysis of GTP during the formation of the 70S ribosomal complex. The sequence is that of Translation initiation factor IF-2 from Rhodopseudomonas palustris (strain ATCC BAA-98 / CGA009).